Reading from the N-terminus, the 462-residue chain is B3 domain-containing protein REM8 (462 aa).

DNA-binding regions (TF-B3) lie at residues 11–103, 148–243, and 249–346; these read NKHF…LGPS, CFSQ…LCSR, and FVKL…FSKI. Residues 351–419 form a disordered region; it reads FEAEDRRHKR…NLQKTQACSV (69 aa). A compositionally biased stretch (basic and acidic residues) spans 369 to 397; that stretch reads ETDKGEPSRATKMGPELEKREKTAEKGEP. The span at 399–418 shows a compositional bias: polar residues; that stretch reads RASNKSSGKQGNLQKTQACS.

Its subcellular location is the nucleus. In Arabidopsis thaliana (Mouse-ear cress), this protein is B3 domain-containing protein REM8 (REM8).